Consider the following 258-residue polypeptide: Ribosomal RNA small subunit methyltransferase A (258 aa).

S-adenosyl-L-methionine contacts are provided by histidine 13, leucine 15, glycine 40, glutamate 62, aspartate 87, and asparagine 108.

Belongs to the class I-like SAM-binding methyltransferase superfamily. rRNA adenine N(6)-methyltransferase family. RsmA subfamily.

The protein localises to the cytoplasm. The enzyme catalyses adenosine(1518)/adenosine(1519) in 16S rRNA + 4 S-adenosyl-L-methionine = N(6)-dimethyladenosine(1518)/N(6)-dimethyladenosine(1519) in 16S rRNA + 4 S-adenosyl-L-homocysteine + 4 H(+). Functionally, specifically dimethylates two adjacent adenosines (A1518 and A1519) in the loop of a conserved hairpin near the 3'-end of 16S rRNA in the 30S particle. May play a critical role in biogenesis of 30S subunits. This chain is Ribosomal RNA small subunit methyltransferase A, found in Sulfurihydrogenibium sp. (strain YO3AOP1).